A 799-amino-acid chain; its full sequence is E3 UFM1-protein ligase 1 homolog (799 aa).

Residues 429 to 483 (TTTTTTTQPSKKKDNLINSDDDDNQDNNKKSSKGKNKKSKQQQSSIQKLINDSED) are disordered. The segment covering 458 to 468 (KSSKGKNKKSK) has biased composition (basic residues). Low complexity predominate over residues 469-478 (QQQSSIQKLI).

The protein belongs to the UFL1 family.

Functionally, E3 UFM1-protein ligase that mediates ufmylation of target proteins. This chain is E3 UFM1-protein ligase 1 homolog, found in Dictyostelium discoideum (Social amoeba).